Consider the following 278-residue polypeptide: Bifunctional protein FolD (278 aa).

NADP(+) is bound by residues 163–165, serine 188, and valine 229; that span reads GRS.

This sequence belongs to the tetrahydrofolate dehydrogenase/cyclohydrolase family. Homodimer.

It catalyses the reaction (6R)-5,10-methylene-5,6,7,8-tetrahydrofolate + NADP(+) = (6R)-5,10-methenyltetrahydrofolate + NADPH. The enzyme catalyses (6R)-5,10-methenyltetrahydrofolate + H2O = (6R)-10-formyltetrahydrofolate + H(+). It functions in the pathway one-carbon metabolism; tetrahydrofolate interconversion. Catalyzes the oxidation of 5,10-methylenetetrahydrofolate to 5,10-methenyltetrahydrofolate and then the hydrolysis of 5,10-methenyltetrahydrofolate to 10-formyltetrahydrofolate. In Exiguobacterium sp. (strain ATCC BAA-1283 / AT1b), this protein is Bifunctional protein FolD.